We begin with the raw amino-acid sequence, 210 residues long: Mediator of RNA polymerase II transcription subunit 20 (210 aa).

This sequence belongs to the Mediator complex subunit 20 family. In terms of assembly, component of the Mediator complex, which is composed of at least 21 subunits that form three structurally distinct submodules. The Mediator head module contains MED6, MED8, MED11, SRB4/MED17, SRB5/MED18, ROX3/MED19, SRB2/MED20 and SRB6/MED22, the middle module contains MED1, MED4, NUT1/MED5, MED7, CSE2/MED9, NUT2/MED10, SRB7/MED21 and SOH1/MED31, and the tail module contains MED2, PGD1/MED3, RGR1/MED14, GAL11/MED15 and SIN4/MED16. The head and the middle modules interact directly with RNA polymerase II, whereas the elongated tail module interacts with gene-specific regulatory proteins. MED1 interacts directly with MED4 and MED7. SRB2/MED20 interacts directly with SRB4/MED17 and SRB5/MED18.

The protein resides in the nucleus. In terms of biological role, component of the Mediator complex, a coactivator involved in the regulated transcription of nearly all RNA polymerase II-dependent genes. Mediator functions as a bridge to convey information from gene-specific regulatory proteins to the basal RNA polymerase II transcription machinery. The Mediator complex, having a compact conformation in its free form, is recruited to promoters by direct interactions with regulatory proteins and serves for the assembly of a functional preinitiation complex with RNA polymerase II and the general transcription factors. The Mediator complex unfolds to an extended conformation and partially surrounds RNA polymerase II, specifically interacting with the unphosphorylated form of the C-terminal domain (CTD) of RNA polymerase II. The Mediator complex dissociates from the RNA polymerase II holoenzyme and stays at the promoter when transcriptional elongation begins. This is Mediator of RNA polymerase II transcription subunit 20 (SRB2) from Saccharomyces cerevisiae (strain ATCC 204508 / S288c) (Baker's yeast).